The following is a 94-amino-acid chain: Co-chaperonin GroES (94 aa).

It belongs to the GroES chaperonin family. Heptamer of 7 subunits arranged in a ring. Interacts with the chaperonin GroEL.

Its subcellular location is the cytoplasm. Together with the chaperonin GroEL, plays an essential role in assisting protein folding. The GroEL-GroES system forms a nano-cage that allows encapsulation of the non-native substrate proteins and provides a physical environment optimized to promote and accelerate protein folding. GroES binds to the apical surface of the GroEL ring, thereby capping the opening of the GroEL channel. The sequence is that of Co-chaperonin GroES from Bacillus pumilus (strain SAFR-032).